The primary structure comprises 215 residues: Interleukin-12 subunit alpha (215 aa).

A signal peptide spans 1–22; sequence MCSSRCLLFLATLAFLIHLSLA. Disulfide bonds link Cys-33/Cys-106, Cys-60/Cys-192, and Cys-81/Cys-119. An N-linked (GlcNAc...) asparagine glycan is attached at Asn-89.

This sequence belongs to the IL-6 superfamily. As to quaternary structure, heterodimer with IL12B; disulfide-linked. This heterodimer is known as interleukin IL-12. Heterodimer with EBI3/IL27B; not disulfide-linked. This heterodimer is known as interleukin IL-35. Interacts with NBR1; this interaction promotes IL-12 secretion.

Its subcellular location is the secreted. In terms of biological role, heterodimerizes with IL12B to form the IL-12 cytokine or with EBI3/IL27B to form the IL-35 cytokine. IL-12 is primarily produced by professional antigen-presenting cells (APCs) such as B-cells and dendritic cells (DCs) as well as macrophages and granulocytes and regulates T-cell and natural killer-cell responses, induces the production of interferon-gamma (IFN-gamma), favors the differentiation of T-helper 1 (Th1) cells and is an important link between innate resistance and adaptive immunity. Mechanistically, exerts its biological effects through a receptor composed of IL12R1 and IL12R2 subunits. Binding to the receptor results in the rapid tyrosine phosphorylation of a number of cellular substrates including the JAK family kinases TYK2 and JAK2. In turn, recruited STAT4 gets phosphorylated and translocates to the nucleus where it regulates cytokine/growth factor responsive genes. As part of IL-35, plays essential roles in maintaining the immune homeostasis of the liver microenvironment and also functions as an immune-suppressive cytokine. Mediates biological events through unconventional receptors composed of IL12RB2 and gp130/IL6ST heterodimers or homodimers. Signaling requires the transcription factors STAT1 and STAT4, which form a unique heterodimer that binds to distinct DNA sites. This chain is Interleukin-12 subunit alpha (IL12A), found in Sigmodon hispidus (Hispid cotton rat).